The primary structure comprises 285 residues: CBY1-interacting BAR domain-containing protein 1-B (285 aa).

The N-terminal 48 residues, 1–48 (MSQTPEARTRDNQTRQIQESVNNVEKHFGELCQIFAGYVRKTARLRDK), are a transit peptide targeting the mitochondrion. The BAR-like stretch occupies residues 11 to 221 (DNQTRQIQES…DIDEEEDLEV (211 aa)). Positions 142–184 (RQIISQAETELQRATMDAARISQQLEETIDNFEKQKIKDIKKL) form a coiled coil. Polar residues predominate over residues 241–261 (NSRSGSTSRAPSVISQPPGNR). The interval 241 to 285 (NSRSGSTSRAPSVISQPPGNRQKNRMEDDEDGEDDNDENSTEDEN) is disordered. Positions 267–285 (EDDEDGEDDNDENSTEDEN) are enriched in acidic residues.

It belongs to the CIBAR family.

It is found in the cytoplasm. The protein resides in the cytoskeleton. Its subcellular location is the microtubule organizing center. The protein localises to the centrosome. It localises to the centriole. It is found in the cell projection. The protein resides in the cilium. Its subcellular location is the nucleus. The protein localises to the mitochondrion inner membrane. It localises to the flagellum. Plays a critical role in regulating mitochondrial ultrastructure and function by maintaining the integrity of mitochondrial morphology, particularly the organization of cristae. Plays a crucial role in ciliogenesis. Plays a key role in the correct positioning of the annulus, a septin-based ring structure in the sperm flagellum, serving both as a physical barrier and a membrane diffusion barrier that separates the midpiece (MP) from the principal piece (PP). The sequence is that of CBY1-interacting BAR domain-containing protein 1-B from Xenopus laevis (African clawed frog).